The following is a 266-amino-acid chain: Glucosamine-6-phosphate deaminase (266 aa).

The active-site Proton acceptor; for enolization step is Asp-72. The active-site For ring-opening step is the Asp-141. The active-site Proton acceptor; for ring-opening step is the His-143. Residue Glu-148 is the For ring-opening step of the active site.

Belongs to the glucosamine/galactosamine-6-phosphate isomerase family. NagB subfamily. As to quaternary structure, homohexamer.

It carries out the reaction alpha-D-glucosamine 6-phosphate + H2O = beta-D-fructose 6-phosphate + NH4(+). It functions in the pathway amino-sugar metabolism; N-acetylneuraminate degradation; D-fructose 6-phosphate from N-acetylneuraminate: step 5/5. Allosterically activated by N-acetylglucosamine 6-phosphate (GlcNAc6P). Catalyzes the reversible isomerization-deamination of glucosamine 6-phosphate (GlcN6P) to form fructose 6-phosphate (Fru6P) and ammonium ion. The sequence is that of Glucosamine-6-phosphate deaminase from Klebsiella pneumoniae subsp. pneumoniae (strain ATCC 700721 / MGH 78578).